Here is a 296-residue protein sequence, read N- to C-terminus: Ribosomal RNA small subunit methyltransferase A (296 aa).

Residues asparagine 30, leucine 32, glycine 57, glutamate 78, aspartate 103, and asparagine 128 each contribute to the S-adenosyl-L-methionine site.

Belongs to the class I-like SAM-binding methyltransferase superfamily. rRNA adenine N(6)-methyltransferase family. RsmA subfamily.

It localises to the cytoplasm. It catalyses the reaction adenosine(1518)/adenosine(1519) in 16S rRNA + 4 S-adenosyl-L-methionine = N(6)-dimethyladenosine(1518)/N(6)-dimethyladenosine(1519) in 16S rRNA + 4 S-adenosyl-L-homocysteine + 4 H(+). Specifically dimethylates two adjacent adenosines (A1518 and A1519) in the loop of a conserved hairpin near the 3'-end of 16S rRNA in the 30S particle. May play a critical role in biogenesis of 30S subunits. The chain is Ribosomal RNA small subunit methyltransferase A from Staphylococcus haemolyticus (strain JCSC1435).